A 363-amino-acid chain; its full sequence is GDP-fucose transporter 1 (363 aa).

The next 8 helical transmembrane spans lie at 33–55, 75–97, 110–129, 139–161, 166–184, 194–213, 226–248, and 263–285; these read FLLR…ISMV, VTFY…ATCC, LKVA…MITF, VPFY…YLLL, SFYA…WLGI, SLTG…LNAI, IWRL…MIVL, and AHFW…VTGL.

The protein belongs to the TPT transporter family. SLC35C subfamily.

Its subcellular location is the golgi apparatus membrane. The catalysed reaction is GMP(out) + GDP-beta-L-fucose(in) = GMP(in) + GDP-beta-L-fucose(out). Functionally, antiporter specific for GDP-l-fucose and depending on the concomitant reverse transport of GMP. Involved in GDP-fucose import from the cytoplasm into the Golgi lumen. This is GDP-fucose transporter 1 (Slc35c1) from Mus musculus (Mouse).